Reading from the N-terminus, the 289-residue chain is Inorganic pyrophosphatase (289 aa).

Ser2 carries the N-acetylserine modification. Position 57 is an N6-acetyllysine (Lys57). Residues Asp116, Asp121, and Asp153 each coordinate Mg(2+). Residue Lys228 is modified to N6-acetyllysine. The residue at position 250 (Ser250) is a Phosphoserine.

It belongs to the PPase family. Homodimer. Requires Mg(2+) as cofactor.

It is found in the cytoplasm. It catalyses the reaction diphosphate + H2O = 2 phosphate + H(+). The sequence is that of Inorganic pyrophosphatase (PPA1) from Pongo abelii (Sumatran orangutan).